The chain runs to 388 residues: Succinate--CoA ligase [ADP-forming] subunit beta (388 aa).

The region spanning lysine 9 to histidine 244 is the ATP-grasp domain. ATP-binding positions include lysine 46, glycine 53–glycine 55, glutamate 99, threonine 102, and glutamate 107. Mg(2+) is bound by residues asparagine 199 and aspartate 213. Residues asparagine 264 and glycine 321 to valine 323 contribute to the substrate site.

Belongs to the succinate/malate CoA ligase beta subunit family. As to quaternary structure, heterotetramer of two alpha and two beta subunits. The cofactor is Mg(2+).

It catalyses the reaction succinate + ATP + CoA = succinyl-CoA + ADP + phosphate. It carries out the reaction GTP + succinate + CoA = succinyl-CoA + GDP + phosphate. It functions in the pathway carbohydrate metabolism; tricarboxylic acid cycle; succinate from succinyl-CoA (ligase route): step 1/1. In terms of biological role, succinyl-CoA synthetase functions in the citric acid cycle (TCA), coupling the hydrolysis of succinyl-CoA to the synthesis of either ATP or GTP and thus represents the only step of substrate-level phosphorylation in the TCA. The beta subunit provides nucleotide specificity of the enzyme and binds the substrate succinate, while the binding sites for coenzyme A and phosphate are found in the alpha subunit. This Shewanella baltica (strain OS195) protein is Succinate--CoA ligase [ADP-forming] subunit beta.